We begin with the raw amino-acid sequence, 714 residues long: Fatty acid oxidation complex subunit alpha (714 aa).

An enoyl-CoA hydratase region spans residues 1–190 (MEMASAFTLN…KLGLVDDVVP (190 aa)). The 3-hydroxyacyl-CoA dehydrogenase stretch occupies residues 306–714 (APLNSVGILG…FWKTTATDLQ (409 aa)).

It in the N-terminal section; belongs to the enoyl-CoA hydratase/isomerase family. This sequence in the central section; belongs to the 3-hydroxyacyl-CoA dehydrogenase family. Heterotetramer of two alpha chains (FadJ) and two beta chains (FadI).

The protein resides in the cytoplasm. The catalysed reaction is a (3S)-3-hydroxyacyl-CoA = a (2E)-enoyl-CoA + H2O. It catalyses the reaction a 4-saturated-(3S)-3-hydroxyacyl-CoA = a (3E)-enoyl-CoA + H2O. It carries out the reaction a (3S)-3-hydroxyacyl-CoA + NAD(+) = a 3-oxoacyl-CoA + NADH + H(+). The enzyme catalyses (3S)-3-hydroxybutanoyl-CoA = (3R)-3-hydroxybutanoyl-CoA. It functions in the pathway lipid metabolism; fatty acid beta-oxidation. Functionally, catalyzes the formation of a hydroxyacyl-CoA by addition of water on enoyl-CoA. Also exhibits 3-hydroxyacyl-CoA epimerase and 3-hydroxyacyl-CoA dehydrogenase activities. The chain is Fatty acid oxidation complex subunit alpha from Shigella flexneri.